Here is a 122-residue protein sequence, read N- to C-terminus: Small ribosomal subunit protein uS13 (122 aa).

The interval 95 to 122 is disordered; it reads GLPVRGQRTKTNSRTRKGRRKTVANKKK. Over residues 101–122 the composition is skewed to basic residues; sequence QRTKTNSRTRKGRRKTVANKKK.

The protein belongs to the universal ribosomal protein uS13 family. As to quaternary structure, part of the 30S ribosomal subunit. Forms a loose heterodimer with protein S19. Forms two bridges to the 50S subunit in the 70S ribosome.

Located at the top of the head of the 30S subunit, it contacts several helices of the 16S rRNA. In the 70S ribosome it contacts the 23S rRNA (bridge B1a) and protein L5 of the 50S subunit (bridge B1b), connecting the 2 subunits; these bridges are implicated in subunit movement. Contacts the tRNAs in the A and P-sites. This is Small ribosomal subunit protein uS13 from Protochlamydia amoebophila (strain UWE25).